Consider the following 571-residue polypeptide: RUN and FYVE domain-containing protein 4 (571 aa).

Residues 33–166 (TDTSAELHRL…VAFELDLQQP (134 aa)) form the RUN domain. Residues 174 to 207 (MFSESRCSSSTQTQGRRPRKNKDAPKKIPAAYGG) form a disordered region. Polar residues predominate over residues 178-188 (SRCSSSTQTQG). Residues 408 to 481 (EVSLQDEIKS…ERRDAMYQEE (74 aa)) adopt a coiled-coil conformation. The FYVE-type zinc finger occupies 474–567 (RDAMYQEELG…CCPPCAQGRE (94 aa)). The Zn(2+) site is built by C521, C524, C537, C540, C545, C548, C559, and C562.

Forms homodimers (via coiled coil domain). Interacts with RAB7A. Forms a ternary complex with RAB7A and LAMP2; the interaction with RAB7A is mediated by RUFY4 (via RUN and coiled coil domains). Interacts with GTP-, but not GDP-bound ARL8A and ARL8B. Interacts with dynactin/DCTN1 and the dynein intermediate chain DYNC1I1/2.

The protein resides in the cytoplasmic vesicle. The protein localises to the autophagosome. It is found in the lysosome. Its function is as follows. ARL8 effector that promotes the coupling of endolysosomes to dynein-dynactin for retrograde transport along microtubules. Acts by binding both GTP-bound ARL8 and dynein-dynactin. In nonneuronal cells, promotes concentration of endolysosomes in the juxtanuclear area. In hippocampal neurons, drives retrograde transport of endolysosomes from the axon to the soma. Positive regulator of macroautophagy in dendritic cells. Increases autophagic flux, probably by stimulating both autophagosome formation and facilitating tethering with lysosomes. Binds to phosphatidylinositol 3-phosphate (PtdIns3P) through its FYVE-type zinc finger. Positive regulator of osteosclast bone-resorbing activity, possibly by promoting late endosome-lysosome fusion by acting as an adapter protein between RAB7A on late endosomes and LAMP2 on primary lysosomes. In Homo sapiens (Human), this protein is RUN and FYVE domain-containing protein 4 (RUFY4).